Here is a 1657-residue protein sequence, read N- to C-terminus: Ras GTPase-activating-like protein IQGAP1 (1657 aa).

Ser-2 is modified (N-acetylserine). Ser-2 bears the Phosphoserine mark. The region spanning 44-159 is the Calponin-homology (CH) domain; it reads LCHLEEAKRW…YCIHALSLYL (116 aa). Residue Tyr-172 is modified to Phosphotyrosine. Ser-330 is modified (phosphoserine). Positions 679 to 712 constitute a WW domain; it reads GDNNSKWVKHWVKGGYYYYHNLETQEGGWDEPPN. IQ domains lie at 745–774, 775–804, 805–834, and 835–864; these read NEGL…FLKK, QIPA…YLRS, HKDE…YFRD, and HIND…AEDP. Positions 956 to 1274 are C1; that stretch reads GGLKALSKEK…FFQTACDVPE (319 aa). The Ras-GAP domain maps to 1020–1269; sequence YLLLRLFKTA…QKFRRFFQTA (250 aa). Positions 1276 to 1657 are C2; sequence QDKFNVDEYS…FLLNKKFYGK (382 aa). The disordered stretch occupies residues 1410–1448; that stretch reads TPATSEQEAEHQRAMQRRAIRDAKTPDKMKKSKSVKEDS. Basic and acidic residues predominate over residues 1417 to 1448; the sequence is EAEHQRAMQRRAIRDAKTPDKMKKSKSVKEDS. Ser-1441 carries the post-translational modification Phosphoserine; by PKC. Ser-1443 carries the post-translational modification Phosphoserine; by PKC/PRKCE.

In terms of assembly, interacts with CDC42; the interaction is demonstrated with IQGAP1 in GTP-bound and in nucleotide-free state. Interacts with RAC1. Does not interact with RHOA. Interacts with TSG101. Interacts with PAK6. Interacts with TMEM14B; this interaction increases IQGAP1 phosphorylation and induces its nuclear translocation. Interacts with SASH1. Interacts with PJVK. Interacts with SLC26A4; this interaction enhances the chloride-bicarbonate exchange activity of SLC26A4. Interacts with SVEP1. Interacts with ILK; the interaction is required for localization of IQGAP to the cell cortex. (Microbial infection) Interacts with ebolavirus vp40. As to quaternary structure, (Microbial infection) Interacts with human cytomegalovirus protein UL5. In terms of assembly, (Microbial infection) Interacts with C.jejuni invasion antigen D (CiaD). In terms of processing, phosphorylation of Ser-1443 by PKC/PRKCE prevents interaction between C1 and C2, allowing binding of nucleotide-free CDC42. Ser-1443 phosphorylation enhances the ability to promote neurite outgrowth. As to expression, expressed in the placenta, lung, and kidney. A lower level expression is seen in the heart, liver, skeletal muscle and pancreas.

Its subcellular location is the cell membrane. The protein resides in the nucleus. It is found in the cytoplasm. It localises to the cell cortex. The protein localises to the apical cell membrane. Its subcellular location is the basolateral cell membrane. Functionally, plays a crucial role in regulating the dynamics and assembly of the actin cytoskeleton. Recruited to the cell cortex by interaction with ILK which allows it to cooperate with its effector DIAPH1 to locally stabilize microtubules and allow stable insertion of caveolae into the plasma membrane. Binds to activated CDC42 but does not stimulate its GTPase activity. Associates with calmodulin. May promote neurite outgrowth. May play a possible role in cell cycle regulation by contributing to cell cycle progression after DNA replication arrest. The chain is Ras GTPase-activating-like protein IQGAP1 (IQGAP1) from Homo sapiens (Human).